The following is a 181-amino-acid chain: NADH-quinone oxidoreductase subunit 2 (181 aa).

[2Fe-2S] cluster contacts are provided by Cys-83, Ser-87, Cys-88, Cys-124, and Cys-128. The cysteines at positions 144 and 172 are disulfide-linked.

The protein belongs to the complex I 24 kDa subunit family. In terms of assembly, NDH-1 is composed of 15 different subunits, Nqo1 to Nqo15. The complex has a L-shaped structure, with the hydrophobic arm (subunits Nqo7, Nqo8 and Nqo10 to Nqo14) embedded in the membrane and the hydrophilic peripheral arm (subunits Nqo1 to Nqo6, Nqo9 and Nqo15) protruding into the bacterial cytoplasm. The hydrophilic domain contains all the redox centers. Requires [2Fe-2S] cluster as cofactor.

It is found in the cell membrane. The enzyme catalyses a quinone + NADH + 5 H(+)(in) = a quinol + NAD(+) + 4 H(+)(out). In terms of biological role, NDH-1 shuttles electrons from NADH, via FMN and iron-sulfur (Fe-S) centers, to quinones in the respiratory chain. The immediate electron acceptor for the enzyme in this species is menaquinone. Couples the redox reaction to proton translocation (for every two electrons transferred, four hydrogen ions are translocated across the cytoplasmic membrane), and thus conserves the redox energy in a proton gradient required for the synthesis of ATP. This is NADH-quinone oxidoreductase subunit 2 (nqo2) from Thermus thermophilus (strain ATCC 27634 / DSM 579 / HB8).